The sequence spans 359 residues: MTLESMMACCLSDEVKESKRINAEIEKQLRRDKRDARRELKLLLLGTGESGKSTFIKQMRIIHGAGYSEEDKRGFTKLVYQNIFTAMQAMIRAMETLKILYKYEQNKANALLIREVDVEKVTTFEHRYVSAIKTLWNDPGIQECYDRRREYQLSDSAKYYLTDVDRIATSGYLPTQQDVLRVRVPTTGIIEYPFDLENIIFRMVDVGGQRSERRKWIHCFENVTSIMFLVALSEYDQVLVESDNENRMEESKALFRTIVTYPWFQNSSVILFLNKKDLLEDKILHSHLVDYFPEFDGPQRDAQAAREFILKMFVDLNPDSDKIIYSHFTCATDTENIRFVFAAVKDTILQLNLKEYNLV.

S-palmitoyl cysteine attachment occurs at residues C9 and C10. Positions 38–359 (RELKLLLLGT…QLNLKEYNLV (322 aa)) constitute a G-alpha domain. Residues 41 to 54 (KLLLLGTGESGKST) are G1 motif. GTP-binding positions include 46–53 (GTGESGKS) and 180–183 (LRVR). S53 contributes to the Mg(2+) binding site. The tract at residues 178–186 (DVLRVRVPT) is G2 motif. T186 provides a ligand contact to Mg(2+). Positions 201–210 (FRMVDVGGQR) are G3 motif. The segment at 270–277 (ILFLNKKD) is G4 motif. Residues 274–277 (NKKD) and A331 contribute to the GTP site. The G5 motif stretch occupies residues 329–334 (TCATDT).

It belongs to the G-alpha family. G(q) subfamily. As to quaternary structure, g proteins are composed of 3 units; alpha, beta and gamma. The alpha chain contains the guanine nucleotide binding site. Interacts with RGS22. Interacts with NTSR1.

It is found in the cell membrane. Its subcellular location is the cytoplasm. The catalysed reaction is GTP + H2O = GDP + phosphate + H(+). In terms of biological role, guanine nucleotide-binding proteins (G proteins) function as transducers downstream of G protein-coupled receptors (GPCRs) in numerous signaling cascades. The alpha chain contains the guanine nucleotide binding site and alternates between an active, GTP-bound state and an inactive, GDP-bound state. Signaling by an activated GPCR promotes GDP release and GTP binding. The alpha subunit has a low GTPase activity that converts bound GTP to GDP, thereby terminating the signal. Both GDP release and GTP hydrolysis are modulated by numerous regulatory proteins. Signaling is mediated via phospholipase C-beta-dependent inositol lipid hydrolysis for signal propagation: activates phospholipase C-beta: following GPCR activation, GNA11 activates PLC-beta (PLCB1, PLCB2, PLCB3 or PLCB4), leading to production of diacylglycerol (DAG) and inositol 1,4,5-trisphosphate (IP3). Transduces FFAR4 signaling in response to long-chain fatty acids (LCFAs). Together with GNAQ, required for heart development. In the respiratory epithelium, transmits OXGR1-dependent signals that lead to downstream intracellular Ca(2+) release and mucocilliary clearance of airborne pathogens. The polypeptide is Guanine nucleotide-binding protein subunit alpha-11 (GNA11) (Bos taurus (Bovine)).